The chain runs to 39 residues: GVKEKLLAVLRKACPVIEKLAKKCHGTVATLKKACSLIH.

An intrachain disulfide couples Cys14 to Cys35.

Belongs to the ectatomin family. Ectatomin-Et subfamily. As to quaternary structure, heterodimer of subunits A and B; disulfide-linked. As to expression, expressed by the venom gland.

Its subcellular location is the secreted. The protein localises to the target cell membrane. The protein is U1-ectatotoxin-Et1b subunit A of Ectatomma tuberculatum (Selva ant).